The sequence spans 149 residues: Large ribosomal subunit protein bL9 (149 aa).

The protein belongs to the bacterial ribosomal protein bL9 family.

In terms of biological role, binds to the 23S rRNA. The protein is Large ribosomal subunit protein bL9 of Laribacter hongkongensis (strain HLHK9).